We begin with the raw amino-acid sequence, 306 residues long: Ribonuclease BN (306 aa).

The Zn(2+) site is built by histidine 64, histidine 66, aspartate 68, histidine 69, histidine 141, aspartate 212, and histidine 270. Aspartate 68 serves as the catalytic Proton acceptor.

This sequence belongs to the RNase Z family. RNase BN subfamily. Homodimer. Zn(2+) serves as cofactor.

In terms of biological role, zinc phosphodiesterase, which has both exoribonuclease and endoribonuclease activities. This chain is Ribonuclease BN, found in Klebsiella pneumoniae subsp. pneumoniae (strain ATCC 700721 / MGH 78578).